The primary structure comprises 194 residues: Chorion class B protein ERB4 (194 aa).

Residues 1-20 (MSSNVIVLCVSALFIQCAVS) form the signal peptide. A left arm region spans residues 22-72 (CVGRIGSLRGGPFDGWGYDGLGYDGFGIGGWNGRGCGGLGDDIAAAAALGA). Residues 73–128 (SHGGTLAVVSTSAAPTGLGIASENVYEGSVGVCGNLPFLGTADVAGEFPTAGLGGI) are central domain. The interval 129-194 (DYTCGDGAVG…RGCGCGANYY (66 aa)) is right arm (Gly-rich tandem repeats).

This sequence belongs to the chorion protein family.

This protein is one of many from the eggshell of the silk moth. This Bombyx mori (Silk moth) protein is Chorion class B protein ERB4.